The sequence spans 251 residues: Ubiquinone/menaquinone biosynthesis C-methyltransferase UbiE (251 aa).

S-adenosyl-L-methionine contacts are provided by residues T74, D95, 123–124 (NA), and S140.

Belongs to the class I-like SAM-binding methyltransferase superfamily. MenG/UbiE family.

It catalyses the reaction a 2-demethylmenaquinol + S-adenosyl-L-methionine = a menaquinol + S-adenosyl-L-homocysteine + H(+). The enzyme catalyses a 2-methoxy-6-(all-trans-polyprenyl)benzene-1,4-diol + S-adenosyl-L-methionine = a 5-methoxy-2-methyl-3-(all-trans-polyprenyl)benzene-1,4-diol + S-adenosyl-L-homocysteine + H(+). The protein operates within quinol/quinone metabolism; menaquinone biosynthesis; menaquinol from 1,4-dihydroxy-2-naphthoate: step 2/2. It functions in the pathway cofactor biosynthesis; ubiquinone biosynthesis. In terms of biological role, methyltransferase required for the conversion of demethylmenaquinol (DMKH2) to menaquinol (MKH2) and the conversion of 2-polyprenyl-6-methoxy-1,4-benzoquinol (DDMQH2) to 2-polyprenyl-3-methyl-6-methoxy-1,4-benzoquinol (DMQH2). This Yersinia enterocolitica serotype O:8 / biotype 1B (strain NCTC 13174 / 8081) protein is Ubiquinone/menaquinone biosynthesis C-methyltransferase UbiE.